The primary structure comprises 183 residues: 2-hydroxy-1,4-benzoquinone reductase (183 aa).

FMN-binding positions include 11 to 18 (SLRRDSFN), 77 to 80 (EYNR), and Ser-113.

It belongs to the SsuE family. Homotetramer. The cofactor is FMN.

It catalyses the reaction 2-hydroxy-1,4-benzoquinone + NADH + 2 H(+) = benzene-1,2,4-triol + NAD(+). Involved in the metabolism of 4-aminophenol. Catalyzes the reduction of the auto-oxidation product 2-hydroxy-1,4-benzoquinone back to hydroxyquinol. Has a broad substrate specificity toward benzoquinones, converting them to the corresponding 1,4-benzenediols. The protein is 2-hydroxy-1,4-benzoquinone reductase of Burkholderia sp.